Reading from the N-terminus, the 576-residue chain is Boron transporter 1 (576 aa).

Over 1 to 84 (MSNESTRVTV…SDWVDAFNYR (84 aa)) the chain is Cytoplasmic. Residues 19–48 (ECAQALERTNDELDRESSVSESRSDEESHE) are disordered. Over residues 26–48 (RTNDELDRESSVSESRSDEESHE) the composition is skewed to basic and acidic residues. A helical membrane pass occupies residues 85 to 105 (VIPSIVDTYFNNLLPAIAFAQ). Residues 106–116 (DMFDRTDNSYG) lie on the Extracellular side of the membrane. Residues 117–134 (VNEVLLSSAMAGIVFGVL) traverse the membrane as a helical segment. Residues 135 to 140 (GGQPLC) are Cytoplasmic-facing. The helical transmembrane segment at 141-160 (IVGVTGPISIFNYTVYEIIK) threads the bilayer. Residues 161-165 (PLNTS) are Extracellular-facing. A helical transmembrane segment spans residues 166–186 (YFGFMFWICMWSMIFHLVLAF). Residues 187 to 192 (TNAVCL) lie on the Cytoplasmic side of the membrane. The helical transmembrane segment at 193 to 213 (LQYVTTFPCDIFGLFINVVYI) threads the bilayer. At 214-235 (QKGIQILTRQFSAKSGEKSVQD) the chain is on the extracellular side. The chain crosses the membrane as a helical span at residues 236 to 256 (GFASVVVALVMTAFGLFFKLF). At 257-274 (HYYPLFSHRIRTFISDYS) the chain is on the cytoplasmic side. A helical membrane pass occupies residues 275-295 (TALSVLFWSSFTHFGGYLHDV). Residues 296–329 (KFKKLPITKAFFPTSKVNRPQNTWLAYEPIPVKD) are Extracellular-facing. Residues 330–350 (VFIALPFGIFLTILFYFDHNV) traverse the membrane as a helical segment. At 351 to 373 (SSLMAQRHQYKLKKPSSFHYDFA) the chain is on the cytoplasmic side. A helical membrane pass occupies residues 374 to 394 (LLGLTTCISGVLGIPAPNGLI). Residues 395–438 (PQAPLHTETLLVRDSNQKVISCVEQRFTNTFQGLMILGTMTRPL) are Extracellular-facing. The chain crosses the membrane as a helical span at residues 439-459 (LVCLGEIPQAVLSGLFFIMGI). Over 460–495 (NGLMTNSIIQRLVFLFSDPNRRDNTSPLMKVSKKSM) the chain is Cytoplasmic. The chain crosses the membrane as a helical span at residues 496–516 (LIFLSFSLTGFAGEFAITNTI). Over 517–518 (AA) the chain is Extracellular. Residues 519 to 539 (IGFPLVLLLSVLVSFSFAYIF) form a helical membrane-spanning segment. Residues 540–576 (PTEELKILDTNVAQKFTIKNLLLENIRDAKFCDKHED) are Cytoplasmic-facing.

It belongs to the anion exchanger (TC 2.A.31) family.

Its subcellular location is the cell membrane. It localises to the vacuole membrane. Its function is as follows. Functions in boric acid/borate export across the plasma membrane, and thereby protects yeast cells from boron toxicity. Involved in the trafficking of proteins to the vacuole. The sequence is that of Boron transporter 1 (BOR1) from Saccharomyces cerevisiae (strain ATCC 204508 / S288c) (Baker's yeast).